Consider the following 1456-residue polypeptide: ABC transporter G family member 44 (1456 aa).

One can recognise an ABC transporter 1 domain in the interval 169–442 (ANLLHVVPNK…FESMGFKCPD (274 aa)). Residue 202-209 (GPPGSGKT) coordinates ATP. An ABC transmembrane type-2 1 domain is found at 520–733 (ELLRTCIARE…AMNAIAVNEF (214 aa)). The next 6 helical transmembrane spans lie at 538-558 (FVYR…MTLF), 571-591 (GIVY…NGFS), 626-646 (IPIS…VIGF), 658-678 (LLLL…AALG), 682-702 (VVAN…SGFI), and 768-788 (IGVG…TIAL). The tract at residues 812-844 (NITGETINDPRNSASSGQTTNTRRNAAPGEASE) is disordered. Over residues 814–835 (TGETINDPRNSASSGQTTNTRR) the composition is skewed to polar residues. The ABC transporter 2 domain maps to 858 to 1110 (VAFNNIRYSV…DLIEYFEGVE (253 aa)). Residue 903 to 910 (GVSGAGKT) coordinates ATP. Positions 1183–1397 (TQCMACLWKQ…TLYGLVASQF (215 aa)) constitute an ABC transmembrane type-2 2 domain. A run of 7 helical transmembrane segments spans residues 1202–1222 (YTVV…TIFW), 1242–1262 (YAAV…VVAV), 1290–1310 (LPYV…MIGF), 1317–1337 (FFWY…YGML), 1347–1367 (IASI…GFVI), 1378–1398 (WYSW…SQFG), and 1425–1445 (FLGV…VSFS).

It belongs to the ABC transporter superfamily. ABCG family. PDR (TC 3.A.1.205) subfamily.

The protein resides in the membrane. Its function is as follows. May be a general defense protein. In Oryza sativa subsp. japonica (Rice), this protein is ABC transporter G family member 44.